Consider the following 401-residue polypeptide: Glyceraldehyde-3-phosphate dehydrogenase A, chloroplastic (401 aa).

The N-terminal 65 residues, 1 to 65 (MASNMLSIAN…RSSQNGVVEA (65 aa)), are a transit peptide targeting the chloroplast. NADP(+) is bound by residues 76-77 (RI), aspartate 100, and arginine 145. D-glyceraldehyde 3-phosphate-binding positions include 217–219 (SCT), threonine 248, arginine 263, 276–277 (TG), and arginine 299. The Nucleophile role is filled by cysteine 218. NADP(+) is bound at residue asparagine 381.

This sequence belongs to the glyceraldehyde-3-phosphate dehydrogenase family. Tetramer of either four A chains (GAPDH 2) or two A and two B chains (GAPDH 1).

It localises to the plastid. It is found in the chloroplast. It carries out the reaction D-glyceraldehyde 3-phosphate + phosphate + NADP(+) = (2R)-3-phospho-glyceroyl phosphate + NADPH + H(+). The protein operates within carbohydrate biosynthesis; Calvin cycle. The sequence is that of Glyceraldehyde-3-phosphate dehydrogenase A, chloroplastic (GAPA) from Spinacia oleracea (Spinach).